A 1457-amino-acid chain; its full sequence is Receptor-type tyrosine-protein phosphatase kappa (1457 aa).

Residues Met-1–Ser-25 form the signal peptide. Residues Ala-26–Lys-752 are Extracellular-facing. Residues Phe-30 to Lys-193 enclose the MAM domain. 3 N-linked (GlcNAc...) asparagine glycosylation sites follow: Asn-100, Asn-139, and Asn-210. The 86-residue stretch at Pro-195–Ser-280 folds into the Ig-like C2-type domain. A disulfide bridge connects residues Cys-215 and Cys-269. Fibronectin type-III domains are found at residues Pro-293 to Pro-388, Thr-391 to Asp-487, Gly-490 to Ser-594, and Leu-595 to Asp-688. 9 N-linked (GlcNAc...) asparagine glycosylation sites follow: Asn-415, Asn-423, Asn-435, Asn-461, Asn-551, Asn-585, Asn-589, Asn-606, and Asn-689. A helical transmembrane segment spans residues Ile-753–Val-774. The Cytoplasmic segment spans residues Lys-775–Ser-1457. A Phosphoserine modification is found at Ser-868. 2 Tyrosine-protein phosphatase domains span residues Phe-899–Ala-1159 and Leu-1191–Tyr-1453. Substrate-binding positions include Asp-1068, Cys-1100–Arg-1106, and Gln-1144. Cys-1100 (phosphocysteine intermediate) is an active-site residue. The Phosphocysteine intermediate role is filled by Cys-1394.

It belongs to the protein-tyrosine phosphatase family. Receptor class 2B subfamily. This protein undergoes proteolytic processing. As to expression, high levels in liver and kidney. Lower levels in lung, brain and heart. Not seen in spleen and testis.

It localises to the membrane. The catalysed reaction is O-phospho-L-tyrosyl-[protein] + H2O = L-tyrosyl-[protein] + phosphate. In terms of biological role, regulation of processes involving cell contact and adhesion such as growth control, tumor invasion, and metastasis. Negative regulator of EGFR signaling pathway. Forms complexes with beta-catenin and gamma-catenin/plakoglobin. Beta-catenin may be a substrate for the catalytic activity of PTPRK/PTP-kappa. This Mus musculus (Mouse) protein is Receptor-type tyrosine-protein phosphatase kappa (Ptprk).